We begin with the raw amino-acid sequence, 324 residues long: Beta-ketoacyl-[acyl-carrier-protein] synthase III (324 aa).

Catalysis depends on residues cysteine 116 and histidine 251. Residues 252–256 (QANLR) form an ACP-binding region. Asparagine 281 is a catalytic residue.

This sequence belongs to the thiolase-like superfamily. FabH family. In terms of assembly, homodimer.

The protein localises to the cytoplasm. It carries out the reaction malonyl-[ACP] + acetyl-CoA + H(+) = 3-oxobutanoyl-[ACP] + CO2 + CoA. Its pathway is lipid metabolism; fatty acid biosynthesis. Its function is as follows. Catalyzes the condensation reaction of fatty acid synthesis by the addition to an acyl acceptor of two carbons from malonyl-ACP. Catalyzes the first condensation reaction which initiates fatty acid synthesis and may therefore play a role in governing the total rate of fatty acid production. Possesses both acetoacetyl-ACP synthase and acetyl transacylase activities. Its substrate specificity determines the biosynthesis of branched-chain and/or straight-chain of fatty acids. The sequence is that of Beta-ketoacyl-[acyl-carrier-protein] synthase III from Xylella fastidiosa (strain 9a5c).